A 300-amino-acid polypeptide reads, in one-letter code: Merozoite surface protein 2 (300 aa).

The first 20 residues, 1 to 20 (MKVIKTLSIINFFIFVTFNI), serve as a signal peptide directing secretion. 2 N-linked (GlcNAc...) asparagine glycosylation sites follow: Asn22 and Asn36. The segment at 44–226 (EESKPPTGAV…EQTESPELQS (183 aa)) is polymorphic region. One copy of the 1; inverted repeat lies at 51–58 (GAVAGSGA). Residues 51–110 (GAVAGSGAGAGSGAGAVAGSGAGAVAGSGAGAVAGSGAGAVAGSGAGAVAGSGAVAGSGA) are 7 X 8 AA tandem repeats of G-S-G-A-G-A-V-A. A run of 5 repeats spans residues 61 to 68 (GSGAGAVA), 69 to 76 (GSGAGAVA), 77 to 84 (GSGAGAVA), 85 to 92 (GSGAGAVA), and 93 to 100 (GSGAGAVA). The stretch at 103 to 110 (GAVAGSGA) is one 7; inverted repeat. Residues 111 to 261 (GNGANPGADA…DSQKECTDGN (151 aa)) are disordered. A compositionally biased stretch (low complexity) spans 123-148 (SPSTPATTTTTTTTNDAEASTSTSSE). Residues 149–165 (NRNHNNAETNPKGKGEV) show a composition bias toward basic and acidic residues. Polar residues-rich tracts occupy residues 167 to 193 (KPNQ…NVPR) and 200 to 228 (KSPT…QSAP). Residue Asn177 is glycosylated (N-linked (GlcNAc...) asparagine). An N-linked (GlcNAc...) asparagine glycan is attached at Asn249. An intrachain disulfide couples Cys257 to Cys265. 2 N-linked (GlcNAc...) asparagine glycosylation sites follow: Asn273 and Asn274. Asn274 carries GPI-anchor amidated asparagine lipidation. Residues 275–300 (SSNIASINKFVVLISATLVLSFAIFI) constitute a propeptide, removed in mature form.

It localises to the cell membrane. In terms of biological role, may play a role in the merozoite attachment to the erythrocyte. This is Merozoite surface protein 2 from Plasmodium falciparum (isolate imr143).